The sequence spans 533 residues: Protein translocase subunit SecD (533 aa).

A run of 6 helical transmembrane segments spans residues 8-28 (ALLV…TFVS), 377-397 (IVGG…GGVV), 400-420 (LALA…GFTL), 422-442 (LPGI…NVLI), 469-489 (LTIL…LQFG), and 495-515 (GFAV…IFVT).

This sequence belongs to the SecD/SecF family. SecD subfamily. In terms of assembly, forms a complex with SecF. Part of the essential Sec protein translocation apparatus which comprises SecA, SecYEG and auxiliary proteins SecDF-YajC and YidC.

It is found in the cell inner membrane. Its function is as follows. Part of the Sec protein translocase complex. Interacts with the SecYEG preprotein conducting channel. SecDF uses the proton motive force (PMF) to complete protein translocation after the ATP-dependent function of SecA. This chain is Protein translocase subunit SecD, found in Syntrophobacter fumaroxidans (strain DSM 10017 / MPOB).